Here is a 175-residue protein sequence, read N- to C-terminus: Lactobacillus up-regulated protein (175 aa).

The signal sequence occupies residues 1–18 (MRSIFLAVLGLMATSSLA). Asn-59 carries N-linked (GlcNAc...) asparagine glycosylation.

This is Lactobacillus up-regulated protein (lbuA) from Emericella nidulans (strain FGSC A4 / ATCC 38163 / CBS 112.46 / NRRL 194 / M139) (Aspergillus nidulans).